The chain runs to 184 residues: Large ribosomal subunit protein uL6 (184 aa).

Belongs to the universal ribosomal protein uL6 family. As to quaternary structure, part of the 50S ribosomal subunit.

In terms of biological role, this protein binds to the 23S rRNA, and is important in its secondary structure. It is located near the subunit interface in the base of the L7/L12 stalk, and near the tRNA binding site of the peptidyltransferase center. The chain is Large ribosomal subunit protein uL6 from Pyrococcus abyssi (strain GE5 / Orsay).